We begin with the raw amino-acid sequence, 779 residues long: Lon protease (779 aa).

Residues 10–203 (LPLLPLRGLL…ILLTILNNER (194 aa)) form the Lon N-terminal domain. 355–362 (GPPGVGKT) provides a ligand contact to ATP. The 182-residue stretch at 591–772 (KDQVGSVTGL…DEVLRHALTK (182 aa)) folds into the Lon proteolytic domain. Residues Ser-678 and Lys-721 contribute to the active site.

Belongs to the peptidase S16 family. As to quaternary structure, homohexamer. Organized in a ring with a central cavity.

The protein resides in the cytoplasm. The enzyme catalyses Hydrolysis of proteins in presence of ATP.. In terms of biological role, ATP-dependent serine protease that mediates the selective degradation of mutant and abnormal proteins as well as certain short-lived regulatory proteins. Required for cellular homeostasis and for survival from DNA damage and developmental changes induced by stress. Degrades polypeptides processively to yield small peptide fragments that are 5 to 10 amino acids long. Binds to DNA in a double-stranded, site-specific manner. This Brevibacillus choshinensis protein is Lon protease.